The chain runs to 342 residues: Ferredoxin--NADP reductase (342 aa).

8 residues coordinate FAD: C17, D36, Q44, Y49, I89, F124, D289, and T330.

Belongs to the ferredoxin--NADP reductase type 2 family. Homodimer. FAD is required as a cofactor.

The catalysed reaction is 2 reduced [2Fe-2S]-[ferredoxin] + NADP(+) + H(+) = 2 oxidized [2Fe-2S]-[ferredoxin] + NADPH. The sequence is that of Ferredoxin--NADP reductase from Rhodopseudomonas palustris (strain BisB5).